The primary structure comprises 103 residues: N(4)-acetylcytidine amidohydrolase (103 aa).

The ASCH domain maps to 6–100 (ITFFQRFQDD…GESQFYVIEF (95 aa)). K21 acts as the Proton acceptor in catalysis. T24 functions as the Nucleophile in the catalytic mechanism. Catalysis depends on E74, which acts as the Proton donor.

This sequence belongs to the N(4)-acetylcytidine amidohydrolase family.

It carries out the reaction N(4)-acetylcytidine + H2O = cytidine + acetate + H(+). The enzyme catalyses N(4)-acetyl-2'-deoxycytidine + H2O = 2'-deoxycytidine + acetate + H(+). The catalysed reaction is N(4)-acetylcytosine + H2O = cytosine + acetate + H(+). Catalyzes the hydrolysis of N(4)-acetylcytidine (ac4C). The chain is N(4)-acetylcytidine amidohydrolase from Klebsiella pneumoniae subsp. pneumoniae (strain ATCC 700721 / MGH 78578).